Reading from the N-terminus, the 125-residue chain is UPF0734 protein DDB_G0273871/DDB_G0273177 (125 aa).

This sequence belongs to the UPF0734 family.

The protein is UPF0734 protein DDB_G0273871/DDB_G0273177 of Dictyostelium discoideum (Social amoeba).